We begin with the raw amino-acid sequence, 233 residues long: MSDSAPEIETPVEEAPKAATPAKSPAKSPGRAKKAKKDGSDKPKKPKAIPTHPPVSEMVVNALKTLNEKGGSSVIAIKKFLVATYKVEIEKLLPFIKKFLKGAVLKGEVLQVKGTGASGSFKMPPPAKKVDKPEAAPKKKAPRPKREIEKKEKKVVAKKPKPAVEKKAAKPAAKKAVAKPAAKKAAAKPAAKEPAAKASPKKAAAKPKAKPTPKKSTAAKPKAAAKKPAKKSK.

Disordered stretches follow at residues 1–55 (MSDS…HPPV) and 115–233 (TGAS…KKSK). The span at 17-29 (KAATPAKSPAKSP) shows a compositional bias: low complexity. In terms of domain architecture, H15 spans 51-125 (THPPVSEMVV…GASGSFKMPP (75 aa)). 2 stretches are compositionally biased toward basic and acidic residues: residues 128–137 (KKVDKPEAAP) and 144–155 (PKREIEKKEKKV). Composition is skewed to basic residues over residues 172 to 186 (AAKKAVAKPAAKKAA), 199 to 213 (SPKKAAAKPKAKPTP), and 223 to 233 (AAAKKPAKKSK).

This sequence belongs to the histone H1/H5 family.

It localises to the nucleus. The protein localises to the chromosome. Its function is as follows. Histones H1 are necessary for the condensation of nucleosome chains into higher-order structures. This is Histone H1-I from Glyptotendipes salinus (Midge).